A 126-amino-acid polypeptide reads, in one-letter code: Small ribosomal subunit protein uS13 (126 aa).

Residues 98–126 form a disordered region; sequence PLRGQSTKNNARTRKGKKKTVANKKKATK. The segment covering 108 to 126 has biased composition (basic residues); that stretch reads ARTRKGKKKTVANKKKATK.

This sequence belongs to the universal ribosomal protein uS13 family. Part of the 30S ribosomal subunit. Forms a loose heterodimer with protein S19. Forms two bridges to the 50S subunit in the 70S ribosome.

In terms of biological role, located at the top of the head of the 30S subunit, it contacts several helices of the 16S rRNA. In the 70S ribosome it contacts the 23S rRNA (bridge B1a) and protein L5 of the 50S subunit (bridge B1b), connecting the 2 subunits; these bridges are implicated in subunit movement. Contacts the tRNAs in the A and P-sites. The sequence is that of Small ribosomal subunit protein uS13 from Parabacteroides distasonis (strain ATCC 8503 / DSM 20701 / CIP 104284 / JCM 5825 / NCTC 11152).